Here is a 369-residue protein sequence, read N- to C-terminus: UDP-N-acetylglucosamine--N-acetylmuramyl-(pentapeptide) pyrophosphoryl-undecaprenol N-acetylglucosamine transferase (369 aa).

Residues 15 to 17 (TGG), N126, R169, S197, and Q299 each bind UDP-N-acetyl-alpha-D-glucosamine.

The protein belongs to the glycosyltransferase 28 family. MurG subfamily.

The protein resides in the cell inner membrane. The enzyme catalyses di-trans,octa-cis-undecaprenyl diphospho-N-acetyl-alpha-D-muramoyl-L-alanyl-D-glutamyl-meso-2,6-diaminopimeloyl-D-alanyl-D-alanine + UDP-N-acetyl-alpha-D-glucosamine = di-trans,octa-cis-undecaprenyl diphospho-[N-acetyl-alpha-D-glucosaminyl-(1-&gt;4)]-N-acetyl-alpha-D-muramoyl-L-alanyl-D-glutamyl-meso-2,6-diaminopimeloyl-D-alanyl-D-alanine + UDP + H(+). It participates in cell wall biogenesis; peptidoglycan biosynthesis. In terms of biological role, cell wall formation. Catalyzes the transfer of a GlcNAc subunit on undecaprenyl-pyrophosphoryl-MurNAc-pentapeptide (lipid intermediate I) to form undecaprenyl-pyrophosphoryl-MurNAc-(pentapeptide)GlcNAc (lipid intermediate II). The sequence is that of UDP-N-acetylglucosamine--N-acetylmuramyl-(pentapeptide) pyrophosphoryl-undecaprenol N-acetylglucosamine transferase from Methylobacterium radiotolerans (strain ATCC 27329 / DSM 1819 / JCM 2831 / NBRC 15690 / NCIMB 10815 / 0-1).